The chain runs to 488 residues: Multidrug resistance outer membrane protein MdtP (488 aa).

The first 23 residues, 1–23 (MINRQLSRLLLCSILGSTTLISG), serve as a signal peptide directing secretion. Residue C24 is the site of N-palmitoyl cysteine attachment. Residue C24 is the site of S-diacylglycerol cysteine attachment.

It belongs to the outer membrane factor (OMF) (TC 1.B.17) family. As to quaternary structure, could be part of a tripartite efflux system composed of MdtN, MdtO and MdtP.

The protein localises to the cell outer membrane. Could be involved in resistance to puromycin, acriflavine and tetraphenylarsonium chloride. This is Multidrug resistance outer membrane protein MdtP (mdtP) from Escherichia coli O157:H7.